A 274-amino-acid polypeptide reads, in one-letter code: uncharacterized protein (274 aa).

The protein belongs to the PhoU family.

This is an uncharacterized protein from Deinococcus radiodurans (strain ATCC 13939 / DSM 20539 / JCM 16871 / CCUG 27074 / LMG 4051 / NBRC 15346 / NCIMB 9279 / VKM B-1422 / R1).